Here is an 833-residue protein sequence, read N- to C-terminus: F1 capsule-anchoring protein (833 aa).

An N-terminal signal peptide occupies residues 1–25; it reads MRYSKLFLCAGLTLATLPCWGRAYT. A disulfide bridge connects residues cysteine 807 and cysteine 829.

This sequence belongs to the fimbrial export usher family.

The protein localises to the cell outer membrane. A probable role in capsular biogenesis. It is likely that the caf1A molecule binds F1 antigen subunits during the extracellular secretion process. This chain is F1 capsule-anchoring protein (caf1A), found in Yersinia pestis.